The sequence spans 338 residues: Probable tRNA pseudouridine synthase B (338 aa).

Residue aspartate 80 is the Nucleophile of the active site. Positions 247-322 (LPRIEIRDTA…IMVDTKRVLM (76 aa)) constitute a PUA domain.

Belongs to the pseudouridine synthase TruB family. Type 2 subfamily.

It catalyses the reaction uridine(55) in tRNA = pseudouridine(55) in tRNA. Its function is as follows. Could be responsible for synthesis of pseudouridine from uracil-55 in the psi GC loop of transfer RNAs. In Methanopyrus kandleri (strain AV19 / DSM 6324 / JCM 9639 / NBRC 100938), this protein is Probable tRNA pseudouridine synthase B.